The primary structure comprises 448 residues: uncharacterized protein (448 aa).

K280 bears the N6-(pyridoxal phosphate)lysine mark.

It belongs to the class-III pyridoxal-phosphate-dependent aminotransferase family.

The protein localises to the cytoplasm. It is found in the mitochondrion. This is an uncharacterized protein from Schizosaccharomyces pombe (strain 972 / ATCC 24843) (Fission yeast).